A 165-amino-acid polypeptide reads, in one-letter code: NADPH-dependent 7-cyano-7-deazaguanine reductase (165 aa).

Residue Cys-56 is the Thioimide intermediate of the active site. The Proton donor role is filled by Asp-63. Residues 78 to 80 and 97 to 98 each bind substrate; these read VES and HE.

The protein belongs to the GTP cyclohydrolase I family. QueF type 1 subfamily.

Its subcellular location is the cytoplasm. The enzyme catalyses 7-aminomethyl-7-carbaguanine + 2 NADP(+) = 7-cyano-7-deazaguanine + 2 NADPH + 3 H(+). It participates in tRNA modification; tRNA-queuosine biosynthesis. In terms of biological role, catalyzes the NADPH-dependent reduction of 7-cyano-7-deazaguanine (preQ0) to 7-aminomethyl-7-deazaguanine (preQ1). The polypeptide is NADPH-dependent 7-cyano-7-deazaguanine reductase (Bacillus thuringiensis subsp. konkukian (strain 97-27)).